The following is a 298-amino-acid chain: Nucleoid occlusion protein (298 aa).

A DNA-binding region (H-T-H motif) is located at residues 152-171 (EALAQRLGKGQSTVANKLRL).

Belongs to the ParB family.

It localises to the cytoplasm. The protein resides in the nucleoid. Functionally, effects nucleoid occlusion by binding relatively nonspecifically to DNA and preventing the assembly of the division machinery in the vicinity of the nucleoid, especially under conditions that disturb the cell cycle. It helps to coordinate cell division and chromosome segregation by preventing the formation of the Z ring through the nucleoid, which would cause chromosome breakage. The sequence is that of Nucleoid occlusion protein from Lysinibacillus sphaericus (strain C3-41).